The chain runs to 426 residues: Dihydroorotase (426 aa).

Zn(2+) contacts are provided by His62 and His64. Substrate-binding positions include 64 to 66 (HLR) and Asn96. Residues Asp154, His181, and His234 each coordinate Zn(2+). Residue Asn280 coordinates substrate. Asp307 serves as a coordination point for Zn(2+). Residue Asp307 is part of the active site. Substrate is bound by residues His311 and 325 to 326 (FG).

The protein belongs to the metallo-dependent hydrolases superfamily. DHOase family. Class I DHOase subfamily. Zn(2+) serves as cofactor.

The enzyme catalyses (S)-dihydroorotate + H2O = N-carbamoyl-L-aspartate + H(+). It participates in pyrimidine metabolism; UMP biosynthesis via de novo pathway; (S)-dihydroorotate from bicarbonate: step 3/3. Functionally, catalyzes the reversible cyclization of carbamoyl aspartate to dihydroorotate. This chain is Dihydroorotase, found in Desulforapulum autotrophicum (strain ATCC 43914 / DSM 3382 / VKM B-1955 / HRM2) (Desulfobacterium autotrophicum).